The chain runs to 473 residues: Trigger factor (473 aa).

A PPIase FKBP-type domain is found at 174 to 261 (GDIAVVSFKG…LKDLKEKELP (88 aa)). A disordered region spans residues 437 to 473 (EISEKVTKSTTKSKTKSKTKKESQAKSEPNKKKKEKK). Residues 456 to 466 (KKESQAKSEPN) show a composition bias toward basic and acidic residues.

The protein belongs to the FKBP-type PPIase family. Tig subfamily.

It is found in the cytoplasm. It catalyses the reaction [protein]-peptidylproline (omega=180) = [protein]-peptidylproline (omega=0). Involved in protein export. Acts as a chaperone by maintaining the newly synthesized protein in an open conformation. Functions as a peptidyl-prolyl cis-trans isomerase. The protein is Trigger factor of Prochlorococcus marinus (strain MIT 9515).